The primary structure comprises 235 residues: Large ribosomal subunit protein uL3 (235 aa).

Gln151 carries the post-translational modification N5-methylglutamine.

This sequence belongs to the universal ribosomal protein uL3 family. As to quaternary structure, part of the 50S ribosomal subunit. Forms a cluster with proteins L14 and L19. In terms of processing, methylated by PrmB.

Its function is as follows. One of the primary rRNA binding proteins, it binds directly near the 3'-end of the 23S rRNA, where it nucleates assembly of the 50S subunit. This chain is Large ribosomal subunit protein uL3, found in Rhodospirillum rubrum (strain ATCC 11170 / ATH 1.1.1 / DSM 467 / LMG 4362 / NCIMB 8255 / S1).